A 503-amino-acid chain; its full sequence is Cytochrome P450 7A1 (503 aa).

A helical membrane pass occupies residues 4-24 (ISLIWGIAVLVSCCIWFIVGI). Cys-444 contacts heme.

This sequence belongs to the cytochrome P450 family. Requires heme as cofactor. Detected in liver (at protein level). Liver.

Its subcellular location is the endoplasmic reticulum membrane. The protein localises to the microsome membrane. The catalysed reaction is cholesterol + reduced [NADPH--hemoprotein reductase] + O2 = 7alpha-hydroxycholesterol + oxidized [NADPH--hemoprotein reductase] + H2O + H(+). It carries out the reaction 4beta-hydroxycholesterol + reduced [NADPH--hemoprotein reductase] + O2 = 4beta,7alpha-dihydroxycholesterol + oxidized [NADPH--hemoprotein reductase] + H2O + H(+). It catalyses the reaction lathosterol + reduced [NADPH--hemoprotein reductase] + O2 = 7alpha,8alpha-epoxy-5alpha-cholestan-3beta-ol + oxidized [NADPH--hemoprotein reductase] + H2O + H(+). The enzyme catalyses lathosterol + reduced [NADPH--hemoprotein reductase] + O2 = 5alpha-cholestan-7-oxo-3beta-ol + oxidized [NADPH--hemoprotein reductase] + H2O + H(+). The catalysed reaction is 7-dehydrocholesterol + reduced [NADPH--hemoprotein reductase] + O2 = 7-oxocholesterol + oxidized [NADPH--hemoprotein reductase] + H2O + H(+). It carries out the reaction (24S)-hydroxycholesterol + reduced [NADPH--hemoprotein reductase] + O2 = (24S)-7alpha-dihydroxycholesterol + oxidized [NADPH--hemoprotein reductase] + H2O + H(+). It catalyses the reaction (24R)-hydroxycholesterol + reduced [NADPH--hemoprotein reductase] + O2 = (24R)-7alpha-dihydroxycholesterol + oxidized [NADPH--hemoprotein reductase] + H2O + H(+). The protein operates within lipid metabolism; bile acid biosynthesis. Its pathway is steroid metabolism; cholesterol degradation. Functionally, a cytochrome P450 monooxygenase involved in the metabolism of endogenous cholesterol and its oxygenated derivatives (oxysterols). Mechanistically, uses molecular oxygen inserting one oxygen atom into a substrate, and reducing the second into a water molecule, with two electrons provided by NADPH via cytochrome P450 reductase (CPR; NADPH-ferrihemoprotein reductase). Functions as a critical regulatory enzyme of bile acid biosynthesis and cholesterol homeostasis. Catalyzes the hydroxylation of carbon hydrogen bond at 7-alpha position of cholesterol, a rate-limiting step in cholesterol catabolism and bile acid biosynthesis. 7-alpha hydroxylates several oxysterols, including 4beta-hydroxycholesterol and 24-hydroxycholesterol. Catalyzes the oxidation of the 7,8 double bond of 7-dehydrocholesterol and lathosterol with direct and predominant formation of the 7-keto derivatives. The chain is Cytochrome P450 7A1 (Cyp7a1) from Rattus norvegicus (Rat).